The following is a 581-amino-acid chain: uncharacterized protein (581 aa).

The N-terminal stretch at 1–28 (MDSKAVSPLIGFVLMLAIIMGLIGIMQA) is a signal peptide.

This is an uncharacterized protein from Archaeoglobus fulgidus (strain ATCC 49558 / DSM 4304 / JCM 9628 / NBRC 100126 / VC-16).